The following is a 303-amino-acid chain: Bifunctional protein FolD (303 aa).

Residues 175–177 (GVS) and isoleucine 243 contribute to the NADP(+) site.

This sequence belongs to the tetrahydrofolate dehydrogenase/cyclohydrolase family. As to quaternary structure, homodimer.

It catalyses the reaction (6R)-5,10-methylene-5,6,7,8-tetrahydrofolate + NADP(+) = (6R)-5,10-methenyltetrahydrofolate + NADPH. It carries out the reaction (6R)-5,10-methenyltetrahydrofolate + H2O = (6R)-10-formyltetrahydrofolate + H(+). Its pathway is one-carbon metabolism; tetrahydrofolate interconversion. Catalyzes the oxidation of 5,10-methylenetetrahydrofolate to 5,10-methenyltetrahydrofolate and then the hydrolysis of 5,10-methenyltetrahydrofolate to 10-formyltetrahydrofolate. This is Bifunctional protein FolD from Xanthomonas euvesicatoria pv. vesicatoria (strain 85-10) (Xanthomonas campestris pv. vesicatoria).